Here is a 374-residue protein sequence, read N- to C-terminus: Queuine tRNA-ribosyltransferase (374 aa).

The active-site Proton acceptor is aspartate 89. Substrate contacts are provided by residues 89–93, aspartate 143, glutamine 187, and glycine 214; that span reads DSGGF. The tract at residues 245–251 is RNA binding; the sequence is GVGKPED. The active-site Nucleophile is aspartate 264. Residues 269 to 273 form an RNA binding; important for wobble base 34 recognition region; that stretch reads TRNAR. Zn(2+)-binding residues include cysteine 302, cysteine 304, cysteine 307, and histidine 333.

The protein belongs to the queuine tRNA-ribosyltransferase family. As to quaternary structure, homodimer. Within each dimer, one monomer is responsible for RNA recognition and catalysis, while the other monomer binds to the replacement base PreQ1. Zn(2+) is required as a cofactor.

The catalysed reaction is 7-aminomethyl-7-carbaguanine + guanosine(34) in tRNA = 7-aminomethyl-7-carbaguanosine(34) in tRNA + guanine. The protein operates within tRNA modification; tRNA-queuosine biosynthesis. In terms of biological role, catalyzes the base-exchange of a guanine (G) residue with the queuine precursor 7-aminomethyl-7-deazaguanine (PreQ1) at position 34 (anticodon wobble position) in tRNAs with GU(N) anticodons (tRNA-Asp, -Asn, -His and -Tyr). Catalysis occurs through a double-displacement mechanism. The nucleophile active site attacks the C1' of nucleotide 34 to detach the guanine base from the RNA, forming a covalent enzyme-RNA intermediate. The proton acceptor active site deprotonates the incoming PreQ1, allowing a nucleophilic attack on the C1' of the ribose to form the product. After dissociation, two additional enzymatic reactions on the tRNA convert PreQ1 to queuine (Q), resulting in the hypermodified nucleoside queuosine (7-(((4,5-cis-dihydroxy-2-cyclopenten-1-yl)amino)methyl)-7-deazaguanosine). The sequence is that of Queuine tRNA-ribosyltransferase from Shewanella baltica (strain OS223).